The following is a 425-amino-acid chain: Inositol hexakisphosphate kinase 2 (425 aa).

ATP is bound by residues 206–208 (ENL) and Asp-219. Substrate-binding positions include 215–223 (PCVLDLKMG), Lys-221, and 235–242 (KAANQIRK). Asp-382 lines the ATP pocket. His-385 lines the substrate pocket.

The protein belongs to the inositol phosphokinase (IPK) family. As to expression, detected in kidney, intestine, liver and heart.

It is found in the nucleus. The enzyme catalyses 1D-myo-inositol hexakisphosphate + ATP = 5-diphospho-1D-myo-inositol 1,2,3,4,6-pentakisphosphate + ADP. Its pathway is phospholipid metabolism; phosphatidylinositol metabolism. In terms of biological role, converts inositol hexakisphosphate (InsP6) to diphosphoinositol pentakisphosphate (InsP7/PP-InsP5). This Oryctolagus cuniculus (Rabbit) protein is Inositol hexakisphosphate kinase 2 (IP6K2).